The chain runs to 518 residues: Putative transposase for insertion sequence IS408 (518 aa).

Residues 11–94 enclose the HTH IS408-type domain; that stretch reads LKEVLRLKWA…PDYTALHREL (84 aa). The segment at residues 23-44 is a DNA-binding region (H-T-H motif); the sequence is LTHRQISRAIGISVGAVSKFAA. The 196-residue stretch at 140–335 folds into the Integrase catalytic domain; that stretch reads QQHRAGEKLF…LPVRRYEIAT (196 aa). Positions 496-518 are disordered; it reads LPTTPAEWRSPEHENVRGPDYYH. The segment covering 504 to 518 has biased composition (basic and acidic residues); the sequence is RSPEHENVRGPDYYH.

The protein belongs to the transposase IS21/IS408/IS1162 family.

Its function is as follows. Required for the transposition of the insertion element. This Burkholderia multivorans (strain ATCC 17616 / 249) protein is Putative transposase for insertion sequence IS408.